Here is a 217-residue protein sequence, read N- to C-terminus: Ribonuclease HII (217 aa).

The region spanning 27–216 (SQVAGVDEAG…VKESIQEGVC (190 aa)) is the RNase H type-2 domain. 3 residues coordinate a divalent metal cation: Asp33, Glu34, and Asp126.

The protein belongs to the RNase HII family. Mn(2+) is required as a cofactor. It depends on Mg(2+) as a cofactor.

Its subcellular location is the cytoplasm. The catalysed reaction is Endonucleolytic cleavage to 5'-phosphomonoester.. Endonuclease that specifically degrades the RNA of RNA-DNA hybrids. The protein is Ribonuclease HII of Chlamydia trachomatis serovar L2 (strain ATCC VR-902B / DSM 19102 / 434/Bu).